A 1942-amino-acid chain; its full sequence is Myosin-2 (1942 aa).

Residues 33–82 (DAKTSVFVAEPKESFVKGTIQSKDAGKVTVKTEAGATLTVKEDQIFPMNP) enclose the Myosin N-terminal SH3-like domain. Residues Thr-64 and Thr-69 each carry the phosphothreonine modification. A Myosin motor domain is found at 86–785 (DKIEDMAMMT…LLGLLEEMRD (700 aa)). Residue 179-186 (GESGAGKT) coordinates ATP. A Phosphotyrosine modification is found at Tyr-389. Residue Thr-419 is modified to Phosphothreonine. Residue Ser-625 is modified to Phosphoserine. The actin-binding stretch occupies residues 662–684 (LNKLMTNLRSTHPHFVRCIIPNE). His-760 carries the post-translational modification Pros-methylhistidine. The IQ domain occupies 788-817 (LAQLITRTQAMCRGFLARVEYQKMVERRES). Residues 849 to 1930 (SAETEKEMAT…ESQVNKLRVK (1082 aa)) adopt a coiled-coil conformation. Phosphoserine occurs at positions 1095 and 1099. The segment at 1130–1175 (EAERASRAKAEKQRSDLSRELEEISERLEEAGGATSAQIEMNKKRE) is disordered. Residues 1131 to 1159 (AERASRAKAEKQRSDLSRELEEISERLEE) are compositionally biased toward basic and acidic residues. 2 positions are modified to phosphoserine: Ser-1165 and Ser-1240. Residue Thr-1244 is modified to Phosphothreonine. Ser-1246 bears the Phosphoserine mark. At Thr-1258 the chain carries Phosphothreonine. Phosphoserine is present on Ser-1264. Residue Thr-1289 is modified to Phosphothreonine. 4 positions are modified to phosphoserine: Ser-1291, Ser-1295, Ser-1306, and Ser-1309. The residue at position 1467 (Tyr-1467) is a Phosphotyrosine. The residue at position 1470 (Thr-1470) is a Phosphothreonine. Ser-1477 bears the Phosphoserine mark. Tyr-1495 bears the Phosphotyrosine mark. Phosphoserine is present on Ser-1498. Residue Thr-1504 is modified to Phosphothreonine. Phosphoserine is present on Ser-1517. Thr-1520 carries the phosphothreonine modification. A phosphoserine mark is found at Ser-1557, Ser-1577, Ser-1603, Ser-1606, Ser-1717, and Ser-1729. 2 positions are modified to phosphothreonine: Thr-1733 and Thr-1739. Ser-1742 carries the phosphoserine modification.

Belongs to the TRAFAC class myosin-kinesin ATPase superfamily. Myosin family. Muscle myosin is a hexameric protein that consists of 2 heavy chain subunits (MHC), 2 alkali light chain subunits (MLC) and 2 regulatory light chain subunits (MLC-2). Interacts with GCSAM. Expressed in type 2a myofibers in the tibialis anterior and soleus muscles (at protein level).

Its subcellular location is the cytoplasm. It is found in the myofibril. Myosins are actin-based motor molecules with ATPase activity essential for muscle contraction. The chain is Myosin-2 from Mus musculus (Mouse).